Reading from the N-terminus, the 293-residue chain is 33 kDa chaperonin (293 aa).

Disulfide bonds link Cys-238–Cys-240 and Cys-271–Cys-274.

It belongs to the HSP33 family. Under oxidizing conditions two disulfide bonds are formed involving the reactive cysteines. Under reducing conditions zinc is bound to the reactive cysteines and the protein is inactive.

The protein localises to the cytoplasm. In terms of biological role, redox regulated molecular chaperone. Protects both thermally unfolding and oxidatively damaged proteins from irreversible aggregation. Plays an important role in the bacterial defense system toward oxidative stress. This chain is 33 kDa chaperonin, found in Staphylococcus epidermidis (strain ATCC 35984 / DSM 28319 / BCRC 17069 / CCUG 31568 / BM 3577 / RP62A).